The chain runs to 394 residues: Elongation factor Tu 1 (394 aa).

Positions 10–204 constitute a tr-type G domain; sequence KPHVNVGTIG…ALDSYIPEPQ (195 aa). The interval 19–26 is G1; it reads GHVDHGKT. Residue 19–26 participates in GTP binding; sequence GHVDHGKT. Thr-26 is a Mg(2+) binding site. The tract at residues 60 to 64 is G2; it reads GITIS. The segment at 81–84 is G3; that stretch reads DCPG. Residues 81-85 and 136-139 contribute to the GTP site; these read DCPGH and NKCD. The G4 stretch occupies residues 136-139; that stretch reads NKCD. The tract at residues 174–176 is G5; the sequence is SAL.

Belongs to the TRAFAC class translation factor GTPase superfamily. Classic translation factor GTPase family. EF-Tu/EF-1A subfamily. In terms of assembly, monomer.

It is found in the cytoplasm. It catalyses the reaction GTP + H2O = GDP + phosphate + H(+). GTP hydrolase that promotes the GTP-dependent binding of aminoacyl-tRNA to the A-site of ribosomes during protein biosynthesis. The chain is Elongation factor Tu 1 from Pseudoalteromonas translucida (strain TAC 125).